A 380-amino-acid chain; its full sequence is Reducing-end xylose-releasing exo-oligoxylanase Rex8A (380 aa).

The Proton donor role is filled by Glu70. Asp265 acts as the Proton acceptor in catalysis.

The protein belongs to the glycosyl hydrolase 8 (cellulase D) family.

It carries out the reaction Hydrolysis of (1-&gt;4)-beta-D-xylose residues from the reducing end of oligosaccharides.. The protein operates within glycan degradation; xylan degradation. Involved in depolymerization of xylan, a major component of the lignocellulosic substrates. Acts as an exo-oligoxylanase that efficiently hydrolyzes xylooligosaccharides, releasing xylose from their reducing ends. Hydrolyzes xylooligomers of 3 to 6 xylose units to xylose and xylobiose. Besides linear xylooligosaccharides, also hydrolyzes branched xylooligomers, such as xylooligomers decorated with 4-O-methyl-D-glucuronic acid moieties. Its proposed role is the degradation of xylooligomers produced by the activity of extracellular xylanases once they have been transported inside cells. Shows minor activity on polymeric xylan (glucuronoxylan from beechwood). Is not active on cellooligosaccharides or cellulosic substrates, or on other polysaccharides such as pectin, polygalacturonic acid, laminarin, or lichenan. The protein is Reducing-end xylose-releasing exo-oligoxylanase Rex8A of Paenibacillus barcinonensis.